Consider the following 504-residue polypeptide: DNA-binding protein reb1 (504 aa).

A disordered region spans residues 30 to 51 (DFDDFPLNKGLKTNNNDYSGSI). 2 consecutive HTH myb-type domains span residues 308-361 (NPFE…RFGD) and 362-422 (KLKR…KAAS). DNA-binding regions (H-T-H motif) lie at residues 335 to 357 (WTKI…RDVV) and 395 to 418 (WTLV…QQLT).

Its subcellular location is the nucleus. In terms of biological role, DNA-binding protein that recognizes sites within both the enhancer and the promoter of rRNA transcription, as well as upstream of many genes transcribed by RNA polymerase II. Has a role in the termination of RNA polymerase I catalyzed transcription. The chain is DNA-binding protein reb1 (reb1) from Schizosaccharomyces pombe (strain 972 / ATCC 24843) (Fission yeast).